The primary structure comprises 254 residues: MKDERRPICEVVAESIERLIIDGVLKVGQPLPSERRLCEKLGFSRSALREGLTVLRGRGIIETAQGRDSRVARLNRVQDTSPLIHLFSTQPRTLYDLLDVRALLEGESARLAATLGTQADFVVITRCYEKMLAASENNKEISLIEHAQLDHAFHLAICQASHNQVLVFTLQSLTDLMFNSVFASVNNLYHRPQQKKQIDRQHARIYNAVLQRLPHVAQRAARDHVRTVKKNLHDIELEGHHLIRSAVPLEMNLS.

Residues 6–74 form the HTH gntR-type domain; sequence RPICEVVAES…QGRDSRVARL (69 aa). The segment at residues 34–53 is a DNA-binding region (H-T-H motif); sequence ERRLCEKLGFSRSALREGLT.

Its function is as follows. Transcriptional activator of the glcDEFGB operon which is associated with glycolate utilization, and encodes malate synthase G and the genes needed for glycolate oxidase activity. Also negatively regulates the transcription of its own gene. Glycolate acts as an effector, but GlcC can also use acetate as an alternative effector. This chain is Glc operon transcriptional activator (glcC), found in Escherichia coli O6:H1 (strain CFT073 / ATCC 700928 / UPEC).